Reading from the N-terminus, the 159-residue chain is Large ribosomal subunit protein uL11 (159 aa).

It belongs to the universal ribosomal protein uL11 family. As to quaternary structure, part of the ribosomal stalk of the 50S ribosomal subunit. Interacts with L10 and the large rRNA to form the base of the stalk. L10 forms an elongated spine to which L12 dimers bind in a sequential fashion forming a multimeric L10(L12)X complex.

Functionally, forms part of the ribosomal stalk which helps the ribosome interact with GTP-bound translation factors. The sequence is that of Large ribosomal subunit protein uL11 from Methanothrix thermoacetophila (strain DSM 6194 / JCM 14653 / NBRC 101360 / PT) (Methanosaeta thermophila).